Here is a 484-residue protein sequence, read N- to C-terminus: PTS system MurNAc-GlcNAc-specific EIIBC component (484 aa).

One can recognise a PTS EIIB type-1 domain in the interval Q5 to D87. The active-site Phosphocysteine intermediate; for EIIB activity is C27. The region spanning K130–D484 is the PTS EIIC type-1 domain. Transmembrane regions (helical) follow at residues I135–V155, M160–I180, F200–A220, L234–V254, I274–V294, I305–V325, L349–V369, A384–L404, F408–I428, and L450–F470.

Its subcellular location is the cell membrane. The catalysed reaction is N-acetyl-beta-D-muramate-(1-&gt;4)-N-acetyl-D-glucosamine(out) + N(pros)-phospho-L-histidyl-[protein] = 6-phospho-N-acetyl-beta-D-muramate-(1-&gt;4)-N-acetyl-D-glucosamine(in) + L-histidyl-[protein]. It functions in the pathway cell wall biogenesis; peptidoglycan recycling. Functionally, the phosphoenolpyruvate-dependent sugar phosphotransferase system (sugar PTS), a major carbohydrate active transport system, catalyzes the phosphorylation of incoming sugar substrates concomitantly with their translocation across the cell membrane. This system is involved in the uptake and phosphorylation of MurNAc-GlcNAc, the principle peptidoglycan turnover product of S.aureus, yielding cytoplasmic MurNAc 6P-GlcNAc. The polypeptide is PTS system MurNAc-GlcNAc-specific EIIBC component (Staphylococcus aureus (strain bovine RF122 / ET3-1)).